The primary structure comprises 500 residues: Cytochrome P450 2D26 (500 aa).

A Phosphoserine modification is found at serine 249. Cysteine 446 serves as a coordination point for heme.

This sequence belongs to the cytochrome P450 family. Heme is required as a cofactor.

Its subcellular location is the endoplasmic reticulum membrane. It is found in the microsome membrane. It catalyses the reaction an organic molecule + reduced [NADPH--hemoprotein reductase] + O2 = an alcohol + oxidized [NADPH--hemoprotein reductase] + H2O + H(+). Its function is as follows. Cytochromes P450 are a group of heme-thiolate monooxygenases. In liver microsomes, this enzyme is involved in an NADPH-dependent electron transport pathway. It oxidizes a variety of structurally unrelated compounds, including steroids, fatty acids, and xenobiotics. The sequence is that of Cytochrome P450 2D26 from Mus musculus (Mouse).